Consider the following 102-residue polypeptide: Keratin-associated protein 25-1 (102 aa).

Belongs to the PMG family. Interacts with hair keratins.

Its function is as follows. In the hair cortex, hair keratin intermediate filaments are embedded in an interfilamentous matrix, consisting of hair keratin-associated proteins (KRTAP), which are essential for the formation of a rigid and resistant hair shaft through their extensive disulfide bond cross-linking with abundant cysteine residues of hair keratins. The matrix proteins include the high-sulfur and high-glycine-tyrosine keratins. The chain is Keratin-associated protein 25-1 (KRTAP25-1) from Homo sapiens (Human).